A 272-amino-acid chain; its full sequence is NADPH-dependent 7-cyano-7-deazaguanine reductase (272 aa).

Substrate is bound at residue 82 to 84 (IES). NADPH is bound at residue 84-85 (SK). Cysteine 178 (thioimide intermediate) is an active-site residue. Catalysis depends on aspartate 185, which acts as the Proton donor. 217–218 (HE) contacts substrate. Position 246 to 247 (246 to 247 (RG)) interacts with NADPH.

This sequence belongs to the GTP cyclohydrolase I family. QueF type 2 subfamily. As to quaternary structure, homodimer.

It localises to the cytoplasm. It catalyses the reaction 7-aminomethyl-7-carbaguanine + 2 NADP(+) = 7-cyano-7-deazaguanine + 2 NADPH + 3 H(+). Its pathway is tRNA modification; tRNA-queuosine biosynthesis. Its function is as follows. Catalyzes the NADPH-dependent reduction of 7-cyano-7-deazaguanine (preQ0) to 7-aminomethyl-7-deazaguanine (preQ1). The sequence is that of NADPH-dependent 7-cyano-7-deazaguanine reductase from Stenotrophomonas maltophilia (strain R551-3).